A 345-amino-acid chain; its full sequence is tRNA N6-adenosine threonylcarbamoyltransferase (345 aa).

Fe cation contacts are provided by H113 and H117. Residues A142–G146, D175, G188, D192, and N282 contribute to the substrate site. D310 lines the Fe cation pocket.

Belongs to the KAE1 / TsaD family. Requires Fe(2+) as cofactor.

The protein resides in the cytoplasm. It catalyses the reaction L-threonylcarbamoyladenylate + adenosine(37) in tRNA = N(6)-L-threonylcarbamoyladenosine(37) in tRNA + AMP + H(+). In terms of biological role, required for the formation of a threonylcarbamoyl group on adenosine at position 37 (t(6)A37) in tRNAs that read codons beginning with adenine. Is involved in the transfer of the threonylcarbamoyl moiety of threonylcarbamoyl-AMP (TC-AMP) to the N6 group of A37, together with TsaE and TsaB. TsaD likely plays a direct catalytic role in this reaction. This chain is tRNA N6-adenosine threonylcarbamoyltransferase, found in Bdellovibrio bacteriovorus (strain ATCC 15356 / DSM 50701 / NCIMB 9529 / HD100).